Consider the following 147-residue polypeptide: MAGSSHTIEPEIYRGVSTLDEPSAAWGWHGLKRNTIQLAGWISVLFMLGYNFGNHKGHVETIWLLVITALLVIGLLIHLFEPKLSQVRTITSRNKPVGHVEPDWTYDQATLTGTWGNLTDSQLRSVNIEPSRVAHLRAADSAKELDN.

2 consecutive transmembrane segments (helical) span residues 35-55 (TIQL…FGNH) and 62-82 (IWLL…LFEP).

As to quaternary structure, has been detected in a cytochrome bc1-aa3 supercomplex; its deletion however leaves complex activity unaffected.

The protein localises to the cell membrane. This is an uncharacterized protein from Corynebacterium glutamicum (strain ATCC 13032 / DSM 20300 / JCM 1318 / BCRC 11384 / CCUG 27702 / LMG 3730 / NBRC 12168 / NCIMB 10025 / NRRL B-2784 / 534).